The chain runs to 683 residues: uncharacterized protein (683 aa).

2 stretches are compositionally biased toward polar residues: residues 407 to 420 (FETS…TYTP) and 512 to 529 (EGSS…SSEA). 3 disordered regions span residues 407-427 (FETS…KLST), 509-556 (FSRE…SSTV), and 621-648 (HNTS…DHPD). Over residues 531–542 (LPPLLTTTPTPT) the composition is skewed to low complexity. Composition is skewed to polar residues over residues 543 to 556 (NTEK…SSTV) and 621 to 630 (HNTSMPNPHH). Residues 633-648 (VKPEDHPHHPEGDHPD) show a composition bias toward basic and acidic residues. A helical transmembrane segment spans residues 657-677 (IWLLPIAGTIFALVALVIVNI).

It localises to the host membrane. This is an uncharacterized protein from Alcelaphine herpesvirus 1 (strain C500) (AlHV-1).